The sequence spans 102 residues: Monothiol glutaredoxin-S7 (102 aa).

Positions 1–101 (MEKLQKMTSE…PMLKRVGALW (101 aa)) constitute a Glutaredoxin domain. Cys-21 contacts [2Fe-2S] cluster. The Responsive for interaction with TGA factors signature appears at 99 to 102 (ALWL).

The protein belongs to the glutaredoxin family. CC-type subfamily.

It localises to the cytoplasm. Its subcellular location is the nucleus. May only reduce GSH-thiol disulfides, but not protein disulfides. The chain is Monothiol glutaredoxin-S7 (GRXS7) from Arabidopsis thaliana (Mouse-ear cress).